The following is a 568-amino-acid chain: 2-succinyl-5-enolpyruvyl-6-hydroxy-3-cyclohexene-1-carboxylate synthase (568 aa).

It belongs to the TPP enzyme family. MenD subfamily. As to quaternary structure, homodimer. Requires Mg(2+) as cofactor. It depends on Mn(2+) as a cofactor. Thiamine diphosphate serves as cofactor.

The enzyme catalyses isochorismate + 2-oxoglutarate + H(+) = 5-enolpyruvoyl-6-hydroxy-2-succinyl-cyclohex-3-ene-1-carboxylate + CO2. Its pathway is quinol/quinone metabolism; 1,4-dihydroxy-2-naphthoate biosynthesis; 1,4-dihydroxy-2-naphthoate from chorismate: step 2/7. It functions in the pathway quinol/quinone metabolism; menaquinone biosynthesis. Its function is as follows. Catalyzes the thiamine diphosphate-dependent decarboxylation of 2-oxoglutarate and the subsequent addition of the resulting succinic semialdehyde-thiamine pyrophosphate anion to isochorismate to yield 2-succinyl-5-enolpyruvyl-6-hydroxy-3-cyclohexene-1-carboxylate (SEPHCHC). In Histophilus somni (strain 2336) (Haemophilus somnus), this protein is 2-succinyl-5-enolpyruvyl-6-hydroxy-3-cyclohexene-1-carboxylate synthase.